The following is a 447-amino-acid chain: Phosphoglucosamine mutase (447 aa).

S104 serves as the catalytic Phosphoserine intermediate. Mg(2+) contacts are provided by S104, D243, D245, and D247. Residue S104 is modified to Phosphoserine.

It belongs to the phosphohexose mutase family. Requires Mg(2+) as cofactor. Activated by phosphorylation.

The enzyme catalyses alpha-D-glucosamine 1-phosphate = D-glucosamine 6-phosphate. Catalyzes the conversion of glucosamine-6-phosphate to glucosamine-1-phosphate. The polypeptide is Phosphoglucosamine mutase (Corynebacterium aurimucosum (strain ATCC 700975 / DSM 44827 / CIP 107346 / CN-1) (Corynebacterium nigricans)).